Reading from the N-terminus, the 143-residue chain is Nucleoside diphosphate kinase (143 aa).

Residues lysine 11, phenylalanine 59, arginine 87, threonine 93, arginine 104, and asparagine 114 each coordinate ATP. The active-site Pros-phosphohistidine intermediate is histidine 117.

This sequence belongs to the NDK family. In terms of assembly, homotetramer. Mg(2+) is required as a cofactor.

The protein localises to the cytoplasm. It catalyses the reaction a 2'-deoxyribonucleoside 5'-diphosphate + ATP = a 2'-deoxyribonucleoside 5'-triphosphate + ADP. It carries out the reaction a ribonucleoside 5'-diphosphate + ATP = a ribonucleoside 5'-triphosphate + ADP. Major role in the synthesis of nucleoside triphosphates other than ATP. The ATP gamma phosphate is transferred to the NDP beta phosphate via a ping-pong mechanism, using a phosphorylated active-site intermediate. This is Nucleoside diphosphate kinase from Thioalkalivibrio sulfidiphilus (strain HL-EbGR7).